Consider the following 186-residue polypeptide: Ion-translocating oxidoreductase complex subunit B (186 aa).

The interval 1–23 (MLTPILALTALALIAGALLGFAA) is hydrophobic. The 4Fe-4S domain occupies 29–88 (EGNPIADQVDAVLPQTQCGQCGFGGCRPYAEAIAAGEAEINRCPPGGQDTVQTLADLLGV). Residues C46, C49, C54, C71, C114, C117, C120, C124, C144, C147, C150, and C154 each coordinate [4Fe-4S] cluster. 4Fe-4S ferredoxin-type domains are found at residues 105 to 134 (QVAW…GAAK) and 135 to 164 (QMHT…MVPV).

This sequence belongs to the 4Fe4S bacterial-type ferredoxin family. RnfB subfamily. As to quaternary structure, the complex is composed of six subunits: RnfA, RnfB, RnfC, RnfD, RnfE and RnfG. [4Fe-4S] cluster serves as cofactor.

The protein resides in the cell inner membrane. In terms of biological role, part of a membrane-bound complex that couples electron transfer with translocation of ions across the membrane. This is Ion-translocating oxidoreductase complex subunit B from Alkalilimnicola ehrlichii (strain ATCC BAA-1101 / DSM 17681 / MLHE-1).